The chain runs to 427 residues: 3-phosphoshikimate 1-carboxyvinyltransferase (427 aa).

Residues Lys-20, Ser-21, and Arg-25 each contribute to the 3-phosphoshikimate site. Lys-20 contacts phosphoenolpyruvate. Residues Gly-92 and Arg-120 each coordinate phosphoenolpyruvate. Residues Ser-166, Gln-168, Asp-312, and Lys-339 each coordinate 3-phosphoshikimate. A phosphoenolpyruvate-binding site is contributed by Gln-168. Catalysis depends on Asp-312, which acts as the Proton acceptor. 2 residues coordinate phosphoenolpyruvate: Arg-343 and Arg-385.

It belongs to the EPSP synthase family. Monomer.

It localises to the cytoplasm. It catalyses the reaction 3-phosphoshikimate + phosphoenolpyruvate = 5-O-(1-carboxyvinyl)-3-phosphoshikimate + phosphate. Its pathway is metabolic intermediate biosynthesis; chorismate biosynthesis; chorismate from D-erythrose 4-phosphate and phosphoenolpyruvate: step 6/7. Functionally, catalyzes the transfer of the enolpyruvyl moiety of phosphoenolpyruvate (PEP) to the 5-hydroxyl of shikimate-3-phosphate (S3P) to produce enolpyruvyl shikimate-3-phosphate and inorganic phosphate. The sequence is that of 3-phosphoshikimate 1-carboxyvinyltransferase from Streptococcus pyogenes serotype M4 (strain MGAS10750).